Consider the following 622-residue polypeptide: WD repeat-containing protein 70 (622 aa).

Positions 37–55 (TAVERSKKTLEAREKEEQI) are enriched in basic and acidic residues. The segment at 37-141 (TAVERSKKTL…DNPVKGIPDS (105 aa)) is disordered. Over residues 67-84 (SSSRQKNTDTSSSSSGSE) the composition is skewed to low complexity. Residues 120 to 132 (SDDEDEEQHEDDD) are compositionally biased toward acidic residues. WD repeat units lie at residues 148 to 187 (HGTK…ASLQ), 195 to 236 (CECH…ECVK), 249 to 289 (GHTA…KHKG), 298 to 337 (GKRV…HTKF), 344 to 383 (TPGT…NPLN), 389 to 434 (ANYF…KVYE), and 437 to 476 (VTEA…QRGA). Residues 508-533 (REPRQRSTRKQLEKDRLDPVKSHKPE) are compositionally biased toward basic and acidic residues. 2 disordered regions span residues 508–549 (REPR…GTHG) and 602–622 (AEVE…KRKI). The segment covering 539 to 549 (PGRGGRVGTHG) has biased composition (gly residues). Acidic residues predominate over residues 604–614 (VESDEEETDNE).

It belongs to the WD repeat GAD-1 family.

This Xenopus tropicalis (Western clawed frog) protein is WD repeat-containing protein 70 (wdr70).